A 353-amino-acid chain; its full sequence is UPF0283 membrane protein YPA_1696 (353 aa).

3 helical membrane-spanning segments follow: residues 71-91 (MVTAGMVILGASVIAQSVQWV), 101-121 (IALGATTAGGLIILAGVGSVV), and 214-234 (ESALMIAVSPLALVDMAFIAW).

It belongs to the UPF0283 family.

Its subcellular location is the cell inner membrane. In Yersinia pestis bv. Antiqua (strain Antiqua), this protein is UPF0283 membrane protein YPA_1696.